The sequence spans 91 residues: DNA-binding protein HU (91 aa).

Belongs to the bacterial histone-like protein family. In terms of assembly, homodimer.

Functionally, histone-like DNA-binding protein which is capable of wrapping DNA to stabilize it, and thus to prevent its denaturation under extreme environmental conditions. The chain is DNA-binding protein HU (hup) from Streptococcus thermophilus.